Reading from the N-terminus, the 117-residue chain is Large ribosomal subunit protein bL20 (117 aa).

It belongs to the bacterial ribosomal protein bL20 family.

Its function is as follows. Binds directly to 23S ribosomal RNA and is necessary for the in vitro assembly process of the 50S ribosomal subunit. It is not involved in the protein synthesizing functions of that subunit. This is Large ribosomal subunit protein bL20 from Helicobacter hepaticus (strain ATCC 51449 / 3B1).